Reading from the N-terminus, the 620-residue chain is Chaperone protein HscA homolog (620 aa).

The protein belongs to the heat shock protein 70 family.

Chaperone involved in the maturation of iron-sulfur cluster-containing proteins. Has a low intrinsic ATPase activity which is markedly stimulated by HscB. The polypeptide is Chaperone protein HscA homolog (Neisseria meningitidis serogroup B (strain ATCC BAA-335 / MC58)).